The chain runs to 172 residues: MSLDLTQFVRNIPDFPIPGVQFKDITPLLGNAQAFDAAIEHFAQRYANQQLQAIVGIESRGFIFGAPLALRLGIGFVPIRKPGKLPAQTIGVDYSLEYGTNRLEIHNDALQAGDRVVVVDDLLATGGTVVAACDLLNQLGAEVVEAAFLIELTFLGGREKLGNRPFYAQIQY.

This sequence belongs to the purine/pyrimidine phosphoribosyltransferase family. Homodimer.

The protein resides in the cytoplasm. It catalyses the reaction AMP + diphosphate = 5-phospho-alpha-D-ribose 1-diphosphate + adenine. It functions in the pathway purine metabolism; AMP biosynthesis via salvage pathway; AMP from adenine: step 1/1. Its function is as follows. Catalyzes a salvage reaction resulting in the formation of AMP, that is energically less costly than de novo synthesis. The chain is Adenine phosphoribosyltransferase from Herpetosiphon aurantiacus (strain ATCC 23779 / DSM 785 / 114-95).